The primary structure comprises 565 residues: MEPKTKKQRSLYIPYAGPVLLEFPLLNKGSAFSMEERRNFNLLGLLPEVVETIEEQAERAWIQYQGFKTEIDKHIYLRNIQDTNETLFYRLVNNHLDEMMPVIYTPTVGAACERFSEIYRRSRGVFISYQNRHNMDDILQNVPNHNIKVIVVTDGERILGLGDQGIGGMGIPIGKLSLYTACGGISPAYTLPVVLDVGTNNQQLLNDPLYMGWRNPRITDDEYYEFVDEFIQAVKQRWPDVLLQFEDFAQKNAMPLLNRYRNEICSFNDDIQGTAAVTVGTLIAASRAAGGQLSEKKIVFLGAGSAGCGIAEMIIAQTQREGLSEEAARQKVFMVDRFGLLTDKMPNLLPFQTKLVQKRENLSDWDTDSDVLSLLDVVRNVKPDILIGVSGQTGLFTEEIIREMHKHCPRPIVMPLSNPTSRVEATPQDIIAWTEGNALVATGSPFNPVVWKDKIYPIAQCNNAFIFPGIGLGVIASGASRITDEMLMSASETLAQYSPLVLNGEGLVLPELKDIQKVSRAIAFAVGKMAQQQGVAVKTSAEALQQAIDDNFWHAEYRDYRRTSI.

The Proton donor role is filled by tyrosine 104. NAD(+) is bound at residue arginine 157. Lysine 175 serves as the catalytic Proton acceptor. A divalent metal cation-binding residues include glutamate 246, aspartate 247, and aspartate 270. The NAD(+) site is built by aspartate 270 and asparagine 418.

This sequence belongs to the malic enzymes family. As to quaternary structure, homotetramer. Mg(2+) serves as cofactor. The cofactor is Mn(2+).

It carries out the reaction (S)-malate + NAD(+) = pyruvate + CO2 + NADH. The catalysed reaction is oxaloacetate + H(+) = pyruvate + CO2. The chain is NAD-dependent malic enzyme from Escherichia coli O127:H6 (strain E2348/69 / EPEC).